Reading from the N-terminus, the 634-residue chain is Chaperone protein HtpG (634 aa).

The interval 1 to 344 (MNETVANNKE…SNDLPLNVSR (344 aa)) is a; substrate-binding. The tract at residues 345–561 (EILQDNKVTQ…DFEMGTQMAK (217 aa)) is b. The interval 562 to 634 (LLAAAGQAVP…TAINSLLTKG (73 aa)) is c.

It belongs to the heat shock protein 90 family. In terms of assembly, homodimer.

It is found in the cytoplasm. In terms of biological role, molecular chaperone. Has ATPase activity. This chain is Chaperone protein HtpG, found in Vibrio vulnificus (strain YJ016).